A 771-amino-acid chain; its full sequence is U-box domain-containing protein 6 (771 aa).

The region spanning 274 to 348 (IPPEELRCPI…ASWCEQNGIT (75 aa)) is the U-box domain. A disordered region spans residues 394–415 (EESSTIESERQQKEKNNAPDEV). Basic and acidic residues predominate over residues 400 to 411 (ESERQQKEKNNA). ARM repeat units follow at residues 456-499 (EEAR…NLAV), 502-542 (NRNK…CLEK), 544-581 (KPVI…NLST), 583-622 (SPNI…NLAS), and 625-664 (EGKE…ILCT). Residues 706 to 722 (EQRHRDQPSPNKEEAPR) are compositionally biased toward basic and acidic residues. Positions 706-751 (EQRHRDQPSPNKEEAPRKTVSAPMAIPAPVSAPESEVKPLTKSISR) are disordered.

It carries out the reaction S-ubiquitinyl-[E2 ubiquitin-conjugating enzyme]-L-cysteine + [acceptor protein]-L-lysine = [E2 ubiquitin-conjugating enzyme]-L-cysteine + N(6)-ubiquitinyl-[acceptor protein]-L-lysine.. It functions in the pathway protein modification; protein ubiquitination. Functionally, functions as an E3 ubiquitin ligase. This is U-box domain-containing protein 6 (PUB6) from Arabidopsis thaliana (Mouse-ear cress).